We begin with the raw amino-acid sequence, 319 residues long: MFIMIKKSELAKAIIVTGALVFSIPTLAEVTLSETTVSSIKSEATVSSTKKALPATPSDCIADSKITAVALSDTRDNGPFSIRTKRISRQSAKGFGGGTIHYPTNASGCGLLGAIAVVPGYVSYENSIKWWGPRLASWGFVVITINTNSIYDDPDSRAAQLNAALDNMIADDTVGSMIDPKRLGAIGWSMGGGGALKLATERSTVRAIMPLAPYHDKSYGEVKTPTLVIACEDDRIAETKKYANAFYKNAIGPKMKVEVNNGSHFCPSYRFNEILLSKPGIAWMQRYINNDTRFDKFLCANENYSKSPRISAYDYKDCP.

Residue S189 is the Nucleophile of the active site. Ca(2+) contacts are provided by D314 and D317.

It catalyses the reaction a triacylglycerol + H2O = a diacylglycerol + a fatty acid + H(+). The sequence is that of Lipase 1 (lip1) from Moraxella sp. (strain TA144).